We begin with the raw amino-acid sequence, 464 residues long: Glutamate--tRNA ligase (464 aa).

Positions 9-19 (PSPTGYLHIGG) match the 'HIGH' region motif. Residues 242–246 (KISKR) carry the 'KMSKS' region motif. An ATP-binding site is contributed by K245.

Belongs to the class-I aminoacyl-tRNA synthetase family. Glutamate--tRNA ligase type 1 subfamily. Monomer.

The protein localises to the cytoplasm. It catalyses the reaction tRNA(Glu) + L-glutamate + ATP = L-glutamyl-tRNA(Glu) + AMP + diphosphate. Catalyzes the attachment of glutamate to tRNA(Glu) in a two-step reaction: glutamate is first activated by ATP to form Glu-AMP and then transferred to the acceptor end of tRNA(Glu). The polypeptide is Glutamate--tRNA ligase (Neisseria gonorrhoeae (strain NCCP11945)).